We begin with the raw amino-acid sequence, 259 residues long: Protein CWC15 homolog (259 aa).

Residues methionine 1 to arginine 182 form a disordered region. Over residues aspartate 52 to arginine 71 the composition is skewed to basic and acidic residues. 2 stretches are compositionally biased toward low complexity: residues serine 72–glycine 82 and glutamine 114–alanine 126. Residues aspartate 129 to alanine 150 are compositionally biased toward acidic residues. A coiled-coil region spans residues alanine 150 to arginine 182. The segment covering glutamine 157–arginine 182 has biased composition (basic and acidic residues).

It belongs to the CWC15 family.

Its function is as follows. Involved in pre-mRNA splicing. This chain is Protein CWC15 homolog (c12.1), found in Drosophila melanogaster (Fruit fly).